A 102-amino-acid polypeptide reads, in one-letter code: YcgL domain-containing protein MS1047 (102 aa).

Residues 1-85 (MLCAIYKSKK…KQESLFEQFK (85 aa)) form the YcgL domain.

The polypeptide is YcgL domain-containing protein MS1047 (Mannheimia succiniciproducens (strain KCTC 0769BP / MBEL55E)).